Reading from the N-terminus, the 266-residue chain is Glucosamine-6-phosphate deaminase (266 aa).

Asp72 serves as the catalytic Proton acceptor; for enolization step. Asp141 acts as the For ring-opening step in catalysis. Catalysis depends on His143, which acts as the Proton acceptor; for ring-opening step. Glu148 (for ring-opening step) is an active-site residue.

The protein belongs to the glucosamine/galactosamine-6-phosphate isomerase family. NagB subfamily. In terms of assembly, homohexamer; trimer of disulfide-linked dimers.

The catalysed reaction is alpha-D-glucosamine 6-phosphate + H2O = beta-D-fructose 6-phosphate + NH4(+). The protein operates within amino-sugar metabolism; N-acetylneuraminate degradation; D-fructose 6-phosphate from N-acetylneuraminate: step 5/5. Allosterically activated by N-acetylglucosamine 6-phosphate (GlcNAc6P). Its function is as follows. Catalyzes the reversible isomerization-deamination of glucosamine 6-phosphate (GlcN6P) to form fructose 6-phosphate (Fru6P) and ammonium ion. The protein is Glucosamine-6-phosphate deaminase of Shigella boydii serotype 18 (strain CDC 3083-94 / BS512).